The sequence spans 118 residues: Large ribosomal subunit protein uL18 (118 aa).

This sequence belongs to the universal ribosomal protein uL18 family. Part of the 50S ribosomal subunit; part of the 5S rRNA/L5/L18/L25 subcomplex. Contacts the 5S and 23S rRNAs.

Its function is as follows. This is one of the proteins that bind and probably mediate the attachment of the 5S RNA into the large ribosomal subunit, where it forms part of the central protuberance. This chain is Large ribosomal subunit protein uL18, found in Helicobacter pylori (strain P12).